The chain runs to 359 residues: Protein RecA (359 aa).

An ATP-binding site is contributed by Gly-74–Thr-81.

The protein belongs to the RecA family.

It localises to the cytoplasm. In terms of biological role, can catalyze the hydrolysis of ATP in the presence of single-stranded DNA, the ATP-dependent uptake of single-stranded DNA by duplex DNA, and the ATP-dependent hybridization of homologous single-stranded DNAs. It interacts with LexA causing its activation and leading to its autocatalytic cleavage. The sequence is that of Protein RecA from Anaplasma marginale (strain Florida).